The chain runs to 198 residues: MTLRCLEPSGNGADRTRSQWGTAGLPEEQSPEAARLAKALRELSQTGWYWGSMTVNEAKEKLKEAPEGTFLIRDSSHSDYLLTISVKTSAGPTNLRIEYQDGKFRLDSIICVKSKLKQFDSVVHLIDYYVQMCKDKRTGPEAPRNGTVHLYLTKPLYTSAPTLQHFCRLAINKCTGTIWGLPLPTRLKDYLEEYKFQV.

Residues 1 to 29 form a disordered region; the sequence is MTLRCLEPSGNGADRTRSQWGTAGLPEEQ. An interaction with AREL1 region spans residues 1–75; it reads MTLRCLEPSG…PEGTFLIRDS (75 aa). Residue S30 is modified to Phosphoserine. Residues 48-156 form the SH2 domain; sequence WYWGSMTVNE…TVHLYLTKPL (109 aa). S52 carries the phosphoserine; by PKC modification. The SOCS box domain occupies 151 to 197; the sequence is YLTKPLYTSAPTLQHFCRLAINKCTGTIWGLPLPTRLKDYLEEYKFQ. Residue K173 forms a Glycyl lysine isopeptide (Lys-Gly) (interchain with G-Cter in ubiquitin) linkage.

Substrate-recognition component of the ECS(SOCS2) complex, composed of SOCS2, CUL5, ELOB, ELOC and RNF7/RBX2. Interacts with IGF1R. Interacts with DCUN1D1. In terms of processing, ubiquitinated; mediated by AREL1 and leading to its subsequent proteasomal degradation. Ubiquitination is dependent on phosphorylation at Ser-52, by PKC and is stimulated by LPS. Phosphorylation at Ser-52 by PKC facilitates its ubiquitination and proteasomal degradation. In terms of tissue distribution, expressed primarily in the testis, some expression in liver and lung.

It localises to the cytoplasm. Its pathway is protein modification; protein ubiquitination. Its function is as follows. Substrate-recognition component of a cullin-5-RING E3 ubiquitin-protein ligase complex (ECS complex, also named CRL5 complex), which mediates the ubiquitination and subsequent proteasomal degradation of target proteins, such as EPOR and GHR. Specifically recognizes and binds phosphorylated proteins via its SH2 domain, promoting their ubiquitination. The ECS(SOCS2) complex acts as a key regulator of growth hormone receptor (GHR) levels by mediating ubiquitination and degradation of GHR, following GHR phosphorylation by JAK2. The ECS(SOCS2) also catalyzes ubiquitination and degradation of JAK2-phosphorylated EPOR. This Mus musculus (Mouse) protein is Suppressor of cytokine signaling 2.